The following is a 361-amino-acid chain: Phospho-N-acetylmuramoyl-pentapeptide-transferase (361 aa).

The next 10 membrane-spanning stretches (helical) occupy residues 18–38, 73–93, 97–117, 135–155, 168–188, 196–216, 235–255, 263–283, 288–308, and 338–358; these read VFNY…ILVL, TMGG…WGDL, FIWV…MDDY, LLQS…ATTG, VLPN…VGSS, GLDG…GVFA, GAGE…GFLW, VFMG…TAVV, LVYF…ILQV, and KVIV…LATL.

Belongs to the glycosyltransferase 4 family. MraY subfamily. Mg(2+) is required as a cofactor.

The protein localises to the cell inner membrane. It carries out the reaction UDP-N-acetyl-alpha-D-muramoyl-L-alanyl-gamma-D-glutamyl-meso-2,6-diaminopimeloyl-D-alanyl-D-alanine + di-trans,octa-cis-undecaprenyl phosphate = di-trans,octa-cis-undecaprenyl diphospho-N-acetyl-alpha-D-muramoyl-L-alanyl-D-glutamyl-meso-2,6-diaminopimeloyl-D-alanyl-D-alanine + UMP. Its pathway is cell wall biogenesis; peptidoglycan biosynthesis. Functionally, catalyzes the initial step of the lipid cycle reactions in the biosynthesis of the cell wall peptidoglycan: transfers peptidoglycan precursor phospho-MurNAc-pentapeptide from UDP-MurNAc-pentapeptide onto the lipid carrier undecaprenyl phosphate, yielding undecaprenyl-pyrophosphoryl-MurNAc-pentapeptide, known as lipid I. The chain is Phospho-N-acetylmuramoyl-pentapeptide-transferase from Coxiella burnetii (strain CbuK_Q154) (Coxiella burnetii (strain Q154)).